Here is a 178-residue protein sequence, read N- to C-terminus: MSRHPTVKWAQRSDWVYITVELPDAEDVKLKLEPEGKFFFSATSGASKTLYEVDLDLLDSVDVNESKASVSSRSVFYLVKKAESKWWNRLTKPEGKHPLYLKVDWDKWVDEDDEDKGGEGDMDFGDFDFNGLNMGDTDEIGEEVAEEDGDGEGETAAETKEKKIDGEKDEEGVNAKKD.

Residues 2-91 (SRHPTVKWAQ…AESKWWNRLT (90 aa)) form the CS domain. Composition is skewed to acidic residues over residues 112-126 (DDEDKGGEGDMDFGD) and 136-155 (DTDEIGEEVAEEDGDGEGET). Residues 112–178 (DDEDKGGEGD…DEEGVNAKKD (67 aa)) are disordered. The segment covering 157–178 (AETKEKKIDGEKDEEGVNAKKD) has biased composition (basic and acidic residues).

Belongs to the p23/wos2 family. In terms of assembly, interacts with HSP90 in an ATP-dependent manner.

Acts as a co-chaperone for HSP90. The sequence is that of Co-chaperone protein p23-1 from Brassica napus (Rape).